The following is a 395-amino-acid chain: Succinate--CoA ligase [ADP-forming] subunit beta (395 aa).

The ATP-grasp domain occupies R9–K240. ATP contacts are provided by residues K49, G56–G58, A98, and E103. Mg(2+) contacts are provided by N195 and D209. Substrate contacts are provided by residues N260 and G322–T324.

Belongs to the succinate/malate CoA ligase beta subunit family. Heterotetramer of two alpha and two beta subunits. Mg(2+) serves as cofactor.

The catalysed reaction is succinate + ATP + CoA = succinyl-CoA + ADP + phosphate. It carries out the reaction GTP + succinate + CoA = succinyl-CoA + GDP + phosphate. Its pathway is carbohydrate metabolism; tricarboxylic acid cycle; succinate from succinyl-CoA (ligase route): step 1/1. Its function is as follows. Succinyl-CoA synthetase functions in the citric acid cycle (TCA), coupling the hydrolysis of succinyl-CoA to the synthesis of either ATP or GTP and thus represents the only step of substrate-level phosphorylation in the TCA. The beta subunit provides nucleotide specificity of the enzyme and binds the substrate succinate, while the binding sites for coenzyme A and phosphate are found in the alpha subunit. This is Succinate--CoA ligase [ADP-forming] subunit beta from Beutenbergia cavernae (strain ATCC BAA-8 / DSM 12333 / CCUG 43141 / JCM 11478 / NBRC 16432 / NCIMB 13614 / HKI 0122).